A 418-amino-acid polypeptide reads, in one-letter code: Dihydrofolate synthase/folylpolyglutamate synthase (418 aa).

53–56 (GKGT) contributes to the ATP binding site. Residue S77 coordinates Mg(2+). 116 to 119 (TYFE) provides a ligand contact to 7,8-dihydropteroate. E140 contributes to the Mg(2+) binding site. A 7,8-dihydropteroate-binding site is contributed by 147 to 149 (LDA). H167 serves as a coordination point for Mg(2+). Residues N252, R284, and D297 each contribute to the ATP site.

It belongs to the folylpolyglutamate synthase family. Monomer. Requires Mg(2+) as cofactor.

It carries out the reaction 7,8-dihydropteroate + L-glutamate + ATP = 7,8-dihydrofolate + ADP + phosphate + H(+). The enzyme catalyses (6S)-5,6,7,8-tetrahydrofolyl-(gamma-L-Glu)(n) + L-glutamate + ATP = (6S)-5,6,7,8-tetrahydrofolyl-(gamma-L-Glu)(n+1) + ADP + phosphate + H(+). The catalysed reaction is 10-formyltetrahydrofolyl-(gamma-L-Glu)(n) + L-glutamate + ATP = 10-formyltetrahydrofolyl-(gamma-L-Glu)(n+1) + ADP + phosphate + H(+). It catalyses the reaction (6R)-5,10-methylenetetrahydrofolyl-(gamma-L-Glu)(n) + L-glutamate + ATP = (6R)-5,10-methylenetetrahydrofolyl-(gamma-L-Glu)(n+1) + ADP + phosphate + H(+). It participates in cofactor biosynthesis; tetrahydrofolate biosynthesis; 7,8-dihydrofolate from 2-amino-4-hydroxy-6-hydroxymethyl-7,8-dihydropteridine diphosphate and 4-aminobenzoate: step 2/2. It functions in the pathway cofactor biosynthesis; tetrahydrofolylpolyglutamate biosynthesis. Functions in two distinct reactions of the de novo folate biosynthetic pathway. Catalyzes the addition of a glutamate residue to dihydropteroate (7,8-dihydropteroate or H2Pte) to form dihydrofolate (7,8-dihydrofolate monoglutamate or H2Pte-Glu). Also catalyzes successive additions of L-glutamate to tetrahydrofolate or 10-formyltetrahydrofolate or 5,10-methylenetetrahydrofolate, leading to folylpolyglutamate derivatives. This chain is Dihydrofolate synthase/folylpolyglutamate synthase (folC), found in Buchnera aphidicola subsp. Schizaphis graminum (strain Sg).